The primary structure comprises 510 residues: ATP synthase subunit alpha (510 aa).

169–176 (GDRQTGKT) serves as a coordination point for ATP.

It belongs to the ATPase alpha/beta chains family. F-type ATPases have 2 components, CF(1) - the catalytic core - and CF(0) - the membrane proton channel. CF(1) has five subunits: alpha(3), beta(3), gamma(1), delta(1), epsilon(1). CF(0) has three main subunits: a(1), b(2) and c(9-12). The alpha and beta chains form an alternating ring which encloses part of the gamma chain. CF(1) is attached to CF(0) by a central stalk formed by the gamma and epsilon chains, while a peripheral stalk is formed by the delta and b chains.

The protein localises to the cell inner membrane. It carries out the reaction ATP + H2O + 4 H(+)(in) = ADP + phosphate + 5 H(+)(out). Produces ATP from ADP in the presence of a proton gradient across the membrane. The alpha chain is a regulatory subunit. This is ATP synthase subunit alpha from Methylobacterium radiotolerans (strain ATCC 27329 / DSM 1819 / JCM 2831 / NBRC 15690 / NCIMB 10815 / 0-1).